The sequence spans 330 residues: Flotillin-like protein FloA (330 aa).

Transmembrane regions (helical) follow at residues I5 to F25 and V28 to G48.

It belongs to the flotillin-like FloA family. In terms of assembly, homooligomerizes.

It localises to the cell membrane. The protein resides in the membrane raft. Functionally, found in functional membrane microdomains (FMM) that may be equivalent to eukaryotic membrane rafts. FMMs are highly dynamic and increase in number as cells age. Flotillins are thought to be important factors in membrane fluidity. This is Flotillin-like protein FloA from Oceanobacillus iheyensis (strain DSM 14371 / CIP 107618 / JCM 11309 / KCTC 3954 / HTE831).